Here is a 394-residue protein sequence, read N- to C-terminus: Probable sugar efflux transporter (394 aa).

12 helical membrane-spanning segments follow: residues 15–35 (VLML…PVGL), 50–70 (VGLM…PMML), 79–99 (MLLM…SVAW), 109–129 (IGIA…AIRV), 137–157 (QALS…LPIG), 168–188 (ITFA…LKLL), 209–229 (PALV…YTAY), 249–269 (FLLL…SIYG), 272–292 (FPAT…MCLY), 299–319 (LAVS…GLAV), 333–353 (VAMS…ALLG), and 362–382 (MASV…WCAW).

Belongs to the major facilitator superfamily. SotB (TC 2.A.1.2) family.

The protein resides in the cell inner membrane. Functionally, involved in the efflux of sugars. The physiological role may be the reduction of the intracellular concentration of toxic sugars or sugar metabolites. This chain is Probable sugar efflux transporter, found in Erwinia tasmaniensis (strain DSM 17950 / CFBP 7177 / CIP 109463 / NCPPB 4357 / Et1/99).